A 427-amino-acid polypeptide reads, in one-letter code: MSRQNWVETSALVECISEYIVRSYGDTFIGLTSTDLSTLSNLLSNLSIANVGFLNDLRTPLQNMSNEFVDFLSTTDRCGFMLRPIWFDSDINPAVTDNFVNSYIKLRNSVPVSDVIRQVNNLSLHNDVVLKIYSVQNAIIRALDPPYGTKVDPTNLFRATALKPSNYGQRRSLCTQLGAGVEAVDFFVSERGRMVFGRRSPNALQAAQYDINVPNFWSVLDVTNARVYFTNTFLGCTITNVQVNAQNGQNPVAFIRVNTDQNDINVDSDAIVSFSLAGGVINVTTAVPMTGFAIAIEGDFHFQMNRCQSYYTGVSITLGAQVPIDDFGIMKHLEIFRMRLLACGQAEMFAESMNRLTMQLIANYTQDNFNPNAVAFATPWYRISERFGVILSFIDQNINLQTRRLMVRHLWVIYSFIAVFGRYYNIN.

It belongs to the phytoreovirus outer capsid protein P8 family. As to quaternary structure, homotrimer. Homomultimer.

The protein resides in the virion. Its subcellular location is the host cytoplasm. Capsid protein which self-assembles to form the outer icosahedral capsid with a T=13 symmetry, about 70 nm in diameter and consisting of 780 molecules capsid proteins. The polypeptide is Outer capsid protein P8 (Catharanthus roseus (Madagascar periwinkle)).